We begin with the raw amino-acid sequence, 306 residues long: Homoserine O-acetyltransferase (306 aa).

Catalysis depends on Cys142, which acts as the Acyl-thioester intermediate. Positions 163 and 192 each coordinate substrate. Catalysis depends on His235, which acts as the Proton acceptor. The active site involves Glu237. Arg249 contributes to the substrate binding site.

The protein belongs to the MetA family.

The protein resides in the cytoplasm. It catalyses the reaction L-homoserine + acetyl-CoA = O-acetyl-L-homoserine + CoA. It participates in amino-acid biosynthesis; L-methionine biosynthesis via de novo pathway; O-acetyl-L-homoserine from L-homoserine: step 1/1. Transfers an acetyl group from acetyl-CoA to L-homoserine, forming acetyl-L-homoserine. This Brucella melitensis biotype 1 (strain ATCC 23456 / CCUG 17765 / NCTC 10094 / 16M) protein is Homoserine O-acetyltransferase.